The primary structure comprises 253 residues: MRILISNDDGIYADGIGQLRKAMETIASEVYVVAPDRERSACGHGITVTRPLRAKVHPFKSGHAKGWVIDGTPADCVKLGLESLLENPPDLVVSGINLGPNLGTDVLYSGTVSAAYEAIINHVPAIAVSLAAWEELNYQVAADFMKDFIPMLKEHPMGEGMLLNINIPNNYNGRGIKVTRLGRRRYIKCFDKRVDPRGKTYFWMAGEPQNLDDDDPETDAAAVNDGYVSVTPLHLDLTDYSYKKKLAGWLPTK.

A divalent metal cation-binding residues include aspartate 8, aspartate 9, serine 40, and asparagine 97.

It belongs to the SurE nucleotidase family. The cofactor is a divalent metal cation.

It localises to the cytoplasm. It catalyses the reaction a ribonucleoside 5'-phosphate + H2O = a ribonucleoside + phosphate. Its function is as follows. Nucleotidase that shows phosphatase activity on nucleoside 5'-monophosphates. The polypeptide is 5'-nucleotidase SurE (Desulforamulus reducens (strain ATCC BAA-1160 / DSM 100696 / MI-1) (Desulfotomaculum reducens)).